The chain runs to 314 residues: Lipoyl synthase (314 aa).

Positions 55, 60, 66, 81, 85, 88, and 292 each coordinate [4Fe-4S] cluster. The 215-residue stretch at 67–281 (WEDREATFLI…TQYAEGLGFS (215 aa)) folds into the Radical SAM core domain.

The protein belongs to the radical SAM superfamily. Lipoyl synthase family. The cofactor is [4Fe-4S] cluster.

Its subcellular location is the cytoplasm. The enzyme catalyses [[Fe-S] cluster scaffold protein carrying a second [4Fe-4S](2+) cluster] + N(6)-octanoyl-L-lysyl-[protein] + 2 oxidized [2Fe-2S]-[ferredoxin] + 2 S-adenosyl-L-methionine + 4 H(+) = [[Fe-S] cluster scaffold protein] + N(6)-[(R)-dihydrolipoyl]-L-lysyl-[protein] + 4 Fe(3+) + 2 hydrogen sulfide + 2 5'-deoxyadenosine + 2 L-methionine + 2 reduced [2Fe-2S]-[ferredoxin]. It participates in protein modification; protein lipoylation via endogenous pathway; protein N(6)-(lipoyl)lysine from octanoyl-[acyl-carrier-protein]: step 2/2. In terms of biological role, catalyzes the radical-mediated insertion of two sulfur atoms into the C-6 and C-8 positions of the octanoyl moiety bound to the lipoyl domains of lipoate-dependent enzymes, thereby converting the octanoylated domains into lipoylated derivatives. This Mycobacterium leprae (strain Br4923) protein is Lipoyl synthase.